Consider the following 160-residue polypeptide: Putative NrdI-like protein (160 aa).

The protein belongs to the NrdI family.

The protein is Putative NrdI-like protein of Streptococcus pyogenes serotype M3 (strain ATCC BAA-595 / MGAS315).